The primary structure comprises 206 residues: Ribosome maturation factor RimM (206 aa).

The PRC barrel domain occupies 113–206 (DDEYYWVDLI…RIDSNWPTEL (94 aa)).

Belongs to the RimM family. In terms of assembly, binds ribosomal protein uS19.

Its subcellular location is the cytoplasm. Its function is as follows. An accessory protein needed during the final step in the assembly of 30S ribosomal subunit, possibly for assembly of the head region. Essential for efficient processing of 16S rRNA. May be needed both before and after RbfA during the maturation of 16S rRNA. It has affinity for free ribosomal 30S subunits but not for 70S ribosomes. In Bordetella petrii (strain ATCC BAA-461 / DSM 12804 / CCUG 43448), this protein is Ribosome maturation factor RimM.